Reading from the N-terminus, the 442-residue chain is Ribosomal protein uS12 methylthiotransferase RimO (442 aa).

The 113-residue stretch at 5-117 (PSIGVVSLGC…VLDAIHAALP (113 aa)) folds into the MTTase N-terminal domain. [4Fe-4S] cluster is bound by residues Cys14, Cys50, Cys79, Cys148, Cys152, and Cys155. The 238-residue stretch at 134 to 371 (LTPPHYAYLK…MAVQEAISRQ (238 aa)) folds into the Radical SAM core domain. The region spanning 374–441 (QRRVGQRQRV…AHDLYGMVVS (68 aa)) is the TRAM domain.

The protein belongs to the methylthiotransferase family. RimO subfamily. [4Fe-4S] cluster is required as a cofactor.

It is found in the cytoplasm. The enzyme catalyses L-aspartate(89)-[ribosomal protein uS12]-hydrogen + (sulfur carrier)-SH + AH2 + 2 S-adenosyl-L-methionine = 3-methylsulfanyl-L-aspartate(89)-[ribosomal protein uS12]-hydrogen + (sulfur carrier)-H + 5'-deoxyadenosine + L-methionine + A + S-adenosyl-L-homocysteine + 2 H(+). Its function is as follows. Catalyzes the methylthiolation of an aspartic acid residue of ribosomal protein uS12. This chain is Ribosomal protein uS12 methylthiotransferase RimO, found in Acidithiobacillus ferrooxidans (strain ATCC 53993 / BNL-5-31) (Leptospirillum ferrooxidans (ATCC 53993)).